The chain runs to 205 residues: MSSRKKVLLKVIILGDSGVGKTSLMNQYVNKKFSASYKATIGADFLTREVLVDDRQVTMQLWDTAGQERFQSLGVAFYRGADCCVLVYDVNNSKSFDALDSWRDEFLIQASPRDPDNFPFVVLGNKIDMEESKRVISTKRAMTFCQSKGNIPYFETSAKEAINVEQAFEVIARNALMQEESEEFSGDFQDPINIHIENDRDGCAC.

GTP-binding positions include 17–23, 33–40, Gly66, 125–128, and 157–159; these read SGVGKTS, FSASYKAT, NKID, and SAK. Positions 37–45 match the Effector region motif; that stretch reads YKATIGADF. Residues Cys203 and Cys205 are each lipidated (S-geranylgeranyl cysteine). Residue Cys205 is modified to Cysteine methyl ester.

It belongs to the small GTPase superfamily. Rab family.

The protein localises to the cell membrane. With respect to regulation, alternates between an inactive form bound to GDP and an active form bound to GTP. Activated by guanine nucleotide-exchange factors (GEFs), and inactivated by GTPase-activating proteins (GAPs). Functionally, ypt/Rab-type GTPases are key regulators of membrane trafficking and intracellular vesicular transport. They act as molecular switches that convert between GTP-bound and GDP-bound states, and regulate virtually all steps of membrane traffic from the formation of the transport vesicle at the donor membrane to its fusion at the target membrane. In the GDP-bound state, Ypt proteins are predominantly cytosolic, solubilized through the interaction with a GDP dissociation inhibitor (GDI). In the GTP-bound state, the proteins are membrane bound and interact with specific effector proteins that select cargo, promote vesicle movement, or verify the correct site of fusion. The protein is Ypt/Rab-type GTPase Rab7 (gtp-14) of Neurospora crassa (strain ATCC 24698 / 74-OR23-1A / CBS 708.71 / DSM 1257 / FGSC 987).